A 434-amino-acid polypeptide reads, in one-letter code: MLLDLNVESPERSGTSSSSVLNSGDAGGGGGGGGGGGLFRFDLLASSPDDDECSGEQHQLPAASGIVTRQLLPPPPPAAPSPAPAWQPPRRAAEDAALAQRPVVAKKTRRGPRSRSSQYRGVTFYRRTGRWESHIWDCGKQVYLGGFDTAHAAARAYDRAAIKFRGLEADINFNLSDYEDDLKQMRNWTKEEFVHILRRQSTGFARGSSKFRGVTLHKCGRWEARMGQLLGKKYIYLGLFDTEVEAARAYDRAAIRFNGREAVTNFEPASYNVDALPDAGNEAIVDGDLDLDLRISQPNARDSKSDVATTGLQLTCDSPESSNITVHQPMGSSPQWTVHHQSTPLPPQHQRLYPSHCLGFLPNLQERPMDRRLELGPMPFPTQAWQMQAPSHLPLLHAAASSGFSAGAGAGVAAATRRQPPFPADHPFYFPPTA.

The disordered stretch occupies residues 1–116 (MLLDLNVESP…KTRRGPRSRS (116 aa)). The segment covering 12–23 (RSGTSSSSVLNS) has biased composition (low complexity). Positions 25–38 (DAGGGGGGGGGGGL) are enriched in gly residues. Residues 72 to 87 (LPPPPPAAPSPAPAWQ) show a composition bias toward pro residues. Basic residues predominate over residues 104–113 (VAKKTRRGPR). A Nuclear localization signal motif is present at residues 106-115 (KKTRRGPRSR). DNA-binding regions (AP2/ERF) lie at residues 118-174 (QYRG…INFN) and 210-267 (KFRG…TNFE). The EAR motif lies at 291–295 (LDLRI).

It belongs to the AP2/ERF transcription factor family. AP2 subfamily. May form homodimer. Interacts with TPR2/ASP1.

Its subcellular location is the nucleus. Its function is as follows. Probable transcription factor. Involved in spikelet transition. Together with SNB, controls synergistically inflorescence architecture and floral meristem establishment via the regulation of spatio-temporal expression of B- and E-function floral organ identity genes in the lodicules and of spikelet meristem genes. Prevents lemma and palea elongation as well as grain growth. The sequence is that of APETALA2-like protein 2 from Oryza sativa subsp. indica (Rice).